The following is a 166-amino-acid chain: Endoribonuclease YbeY (166 aa).

3 residues coordinate Zn(2+): His132, His136, and His142.

Belongs to the endoribonuclease YbeY family. Zn(2+) serves as cofactor.

The protein localises to the cytoplasm. Functionally, single strand-specific metallo-endoribonuclease involved in late-stage 70S ribosome quality control and in maturation of the 3' terminus of the 16S rRNA. In Clostridium botulinum (strain Alaska E43 / Type E3), this protein is Endoribonuclease YbeY.